A 250-amino-acid polypeptide reads, in one-letter code: Pyrroloquinoline-quinone synthase (250 aa).

This sequence belongs to the PqqC family.

It catalyses the reaction 6-(2-amino-2-carboxyethyl)-7,8-dioxo-1,2,3,4,7,8-hexahydroquinoline-2,4-dicarboxylate + 3 O2 = pyrroloquinoline quinone + 2 H2O2 + 2 H2O + H(+). It participates in cofactor biosynthesis; pyrroloquinoline quinone biosynthesis. Its function is as follows. Ring cyclization and eight-electron oxidation of 3a-(2-amino-2-carboxyethyl)-4,5-dioxo-4,5,6,7,8,9-hexahydroquinoline-7,9-dicarboxylic-acid to PQQ. This is Pyrroloquinoline-quinone synthase from Xanthomonas campestris pv. campestris (strain B100).